The primary structure comprises 187 residues: Putative protein YbeM (187 aa).

Residues 1-163 (MMTTILTIHV…PALIMAEVTP (163 aa)) enclose the CN hydrolase domain.

It belongs to the carbon-nitrogen hydrolase superfamily. NIT1/NIT2 family.

Functionally, pseudogene resulting from a nucleotide deletion that introduces a premature stop codon at position 66. This is the C-terminal fragment. The intact protein (AC A0A140NCB4) hydrolyzes deaminated glutathione (dGSH, 2-oxoglutaramate) to alpha-ketoglutarate (alpha-KG) and cysteinylglycine, has less activity against alpha-ketoglutaramate (a-KGM) and no activity on glutathione or L-glutamine. May function as a metabolite repair enzyme. This chain is Putative protein YbeM (ybeM), found in Escherichia coli (strain K12).